The following is a 115-amino-acid chain: Delta-hexatoxin-Hi1a (115 aa).

An N-terminal signal peptide occupies residues 1–18 (MKVIATLYGLLFLTVVLG). A propeptide spanning residues 19 to 73 (DITEGNENDLVENFREELSEADIPLLKKLEAIEDALLEKDFLPYEEEDRNARPKR) is cleaved from the precursor. 4 disulfide bridges follow: Cys74-Cys88, Cys81-Cys93, Cys87-Cys104, and Cys89-Cys115.

It belongs to the neurotoxin 06 (delta-actx) family. Expressed by the venom gland.

It is found in the secreted. Functionally, neurotoxin that slows inactivation of voltage-gated sodium channels (Nav). In vivo, is lethal to both vertebrates and insects. The polypeptide is Delta-hexatoxin-Hi1a (Hadronyche infensa (Fraser island funnel-web spider)).